Reading from the N-terminus, the 341-residue chain is Phosphoribosylformylglycinamidine cyclo-ligase (341 aa).

Belongs to the AIR synthase family.

It is found in the cytoplasm. The catalysed reaction is 2-formamido-N(1)-(5-O-phospho-beta-D-ribosyl)acetamidine + ATP = 5-amino-1-(5-phospho-beta-D-ribosyl)imidazole + ADP + phosphate + H(+). The protein operates within purine metabolism; IMP biosynthesis via de novo pathway; 5-amino-1-(5-phospho-D-ribosyl)imidazole from N(2)-formyl-N(1)-(5-phospho-D-ribosyl)glycinamide: step 2/2. The polypeptide is Phosphoribosylformylglycinamidine cyclo-ligase (Xanthomonas campestris pv. campestris (strain 8004)).